A 124-amino-acid chain; its full sequence is Small ribosomal subunit protein uS13 (124 aa).

The disordered stretch occupies residues Val98–Lys124.

This sequence belongs to the universal ribosomal protein uS13 family. As to quaternary structure, part of the 30S ribosomal subunit. Forms a loose heterodimer with protein S19. Forms two bridges to the 50S subunit in the 70S ribosome.

In terms of biological role, located at the top of the head of the 30S subunit, it contacts several helices of the 16S rRNA. In the 70S ribosome it contacts the 23S rRNA (bridge B1a) and protein L5 of the 50S subunit (bridge B1b), connecting the 2 subunits; these bridges are implicated in subunit movement. Contacts the tRNAs in the A and P-sites. The protein is Small ribosomal subunit protein uS13 of Dictyoglomus turgidum (strain DSM 6724 / Z-1310).